Here is a 778-residue protein sequence, read N- to C-terminus: Aerobic respiration control sensor protein ArcB (778 aa).

Residues 1–25 (MKQIRLLAQYYVDLMMKLGLVRFSM) are Cytoplasmic-facing. The helical transmembrane segment at 26–46 (LLALALVVLAIVVQMAVTMVL) threads the bilayer. Residues 47 to 57 (HGQVESIDVIR) lie on the Periplasmic side of the membrane. The helical transmembrane segment at 58-78 (SIFFGLLITPWAVYFLSVVVE) threads the bilayer. The Cytoplasmic portion of the chain corresponds to 79-778 (QLEESRQRLS…KAWVAKATKK (700 aa)). Residues 153-223 (QSSFLRSFLD…ETDEKVFRHN (71 aa)) form the PAS domain. The 53-residue stretch at 226 to 278 (LTYEQWLDYPDGRKACFEIRKVPYYDRVGKRHGLMGFGRDITERKRYQDALER) folds into the PAC domain. The region spanning 289–507 (TISHELRTPL…TFTLTIHAPS (219 aa)) is the Histidine kinase domain. The residue at position 292 (His292) is a Phosphohistidine; by autocatalysis. Positions 527–643 (NVLLVEDIEL…ALTAMIKKFW (117 aa)) constitute a Response regulatory domain. Residue Asp576 is modified to 4-aspartylphosphate. One can recognise an HPt domain in the interval 678-771 (GPKLITDGLA…RHDVEVLKAW (94 aa)). His717 is modified (phosphohistidine).

In terms of processing, activation requires a sequential transfer of a phosphate group from a His in the primary transmitter domain, to an Asp in the receiver domain and to a His in the secondary transmitter domain.

It localises to the cell inner membrane. The enzyme catalyses ATP + protein L-histidine = ADP + protein N-phospho-L-histidine.. Functionally, member of the two-component regulatory system ArcB/ArcA. Sensor-regulator protein for anaerobic repression of the arc modulon. Activates ArcA via a four-step phosphorelay. ArcB can also dephosphorylate ArcA by a reverse phosphorelay involving His-717 and Asp-576. The polypeptide is Aerobic respiration control sensor protein ArcB (arcB) (Escherichia coli O157:H7).